The primary structure comprises 415 residues: Serine hydroxymethyltransferase (415 aa).

(6S)-5,6,7,8-tetrahydrofolate is bound by residues leucine 117 and 121–123 (GHL). Position 226 is an N6-(pyridoxal phosphate)lysine (lysine 226).

The protein belongs to the SHMT family. In terms of assembly, homodimer. Pyridoxal 5'-phosphate is required as a cofactor.

Its subcellular location is the cytoplasm. It carries out the reaction (6R)-5,10-methylene-5,6,7,8-tetrahydrofolate + glycine + H2O = (6S)-5,6,7,8-tetrahydrofolate + L-serine. It participates in one-carbon metabolism; tetrahydrofolate interconversion. Its pathway is amino-acid biosynthesis; glycine biosynthesis; glycine from L-serine: step 1/1. Its function is as follows. Catalyzes the reversible interconversion of serine and glycine with tetrahydrofolate (THF) serving as the one-carbon carrier. This reaction serves as the major source of one-carbon groups required for the biosynthesis of purines, thymidylate, methionine, and other important biomolecules. Also exhibits THF-independent aldolase activity toward beta-hydroxyamino acids, producing glycine and aldehydes, via a retro-aldol mechanism. The sequence is that of Serine hydroxymethyltransferase from Dehalococcoides mccartyi (strain CBDB1).